A 350-amino-acid polypeptide reads, in one-letter code: Phenylalanine--tRNA ligase alpha subunit (350 aa).

Glu262 contributes to the Mg(2+) binding site.

It belongs to the class-II aminoacyl-tRNA synthetase family. Phe-tRNA synthetase alpha subunit type 1 subfamily. As to quaternary structure, tetramer of two alpha and two beta subunits. Mg(2+) serves as cofactor.

It localises to the cytoplasm. The enzyme catalyses tRNA(Phe) + L-phenylalanine + ATP = L-phenylalanyl-tRNA(Phe) + AMP + diphosphate + H(+). The polypeptide is Phenylalanine--tRNA ligase alpha subunit (pheS) (Thermus thermophilus (strain ATCC 27634 / DSM 579 / HB8)).